A 303-amino-acid chain; its full sequence is Dihydroorotate dehydrogenase B (NAD(+)), catalytic subunit (303 aa).

Substrate contacts are provided by residues Lys46, 70–74, and Asn124; that span reads NAIGL. FMN is bound at residue 46–47; sequence KS. Asn124 contributes to the FMN binding site. Catalysis depends on Cys127, which acts as the Nucleophile. FMN is bound by residues Lys163 and Ile189. 190–191 contacts substrate; it reads NS. FMN-binding positions include Gly216, 242 to 243, and 264 to 265; these read GG and GT.

It belongs to the dihydroorotate dehydrogenase family. Type 1 subfamily. Heterotetramer of 2 PyrK and 2 PyrD type B subunits. FMN serves as cofactor.

It is found in the cytoplasm. The enzyme catalyses (S)-dihydroorotate + NAD(+) = orotate + NADH + H(+). It functions in the pathway pyrimidine metabolism; UMP biosynthesis via de novo pathway; orotate from (S)-dihydroorotate (NAD(+) route): step 1/1. In terms of biological role, catalyzes the conversion of dihydroorotate to orotate with NAD(+) as electron acceptor. In Methanothermobacter thermautotrophicus (strain ATCC 29096 / DSM 1053 / JCM 10044 / NBRC 100330 / Delta H) (Methanobacterium thermoautotrophicum), this protein is Dihydroorotate dehydrogenase B (NAD(+)), catalytic subunit (pyrD).